The primary structure comprises 146 residues: Snaclec coagulation factor IX/factor X-binding protein subunit B (146 aa).

The N-terminal stretch at 1–23 (MGRFIFLSFGLLVVFLSLSGTGA) is a signal peptide. 3 cysteine pairs are disulfide-bonded: cysteine 25–cysteine 36, cysteine 53–cysteine 142, and cysteine 119–cysteine 134. The 112-residue stretch at 32–143 (YEGHCYKPFN…CRMEAYFVCE (112 aa)) folds into the C-type lectin domain. The Ca(2+) site is built by serine 64 and glutamate 70. Glutamate 143 contributes to the Ca(2+) binding site.

Belongs to the snaclec family. Heterodimer with subunit A of IX/X-bp or IX-bp; disulfide-linked. As to expression, expressed by the venom gland.

The protein resides in the secreted. Its function is as follows. When linked to subunit A of IX/X-bp, anticoagulant protein which binds to the gamma-carboxyglutamic acid-domain regions of factors IX (F9) and factor X (F10) in the presence of calcium with a 1 to 1 stoichiometry. Functionally, when linked to subunit A of IX-bp, anticoagulant protein which binds to the gamma-carboxyglutamic acid-domain regions of factor IX (but not to factor X) in the presence of calcium with a 1 to 1 stoichiometry. The chain is Snaclec coagulation factor IX/factor X-binding protein subunit B from Gloydius halys (Chinese water mocassin).